Consider the following 333-residue polypeptide: Leucine carboxyl methyltransferase 1 (333 aa).

S-adenosyl-L-methionine contacts are provided by residues R79, G108, D131, 180 to 181 (NV), and E206.

This sequence belongs to the methyltransferase superfamily. LCMT family.

It carries out the reaction [phosphatase 2A protein]-C-terminal L-leucine + S-adenosyl-L-methionine = [phosphatase 2A protein]-C-terminal L-leucine methyl ester + S-adenosyl-L-homocysteine. Its function is as follows. Methylates the carboxyl group of the C-terminal leucine residue of protein phosphatase 2A catalytic subunits to form alpha-leucine ester residues. This chain is Leucine carboxyl methyltransferase 1 (PPM1), found in Kluyveromyces lactis (strain ATCC 8585 / CBS 2359 / DSM 70799 / NBRC 1267 / NRRL Y-1140 / WM37) (Yeast).